The following is a 425-amino-acid chain: Serine hydroxymethyltransferase (425 aa).

(6S)-5,6,7,8-tetrahydrofolate contacts are provided by residues Leu-128 and 132–134; that span reads GHL. Lys-237 is subject to N6-(pyridoxal phosphate)lysine.

It belongs to the SHMT family. Homodimer. Pyridoxal 5'-phosphate is required as a cofactor.

The protein resides in the cytoplasm. The catalysed reaction is (6R)-5,10-methylene-5,6,7,8-tetrahydrofolate + glycine + H2O = (6S)-5,6,7,8-tetrahydrofolate + L-serine. Its pathway is one-carbon metabolism; tetrahydrofolate interconversion. The protein operates within amino-acid biosynthesis; glycine biosynthesis; glycine from L-serine: step 1/1. Functionally, catalyzes the reversible interconversion of serine and glycine with tetrahydrofolate (THF) serving as the one-carbon carrier. This reaction serves as the major source of one-carbon groups required for the biosynthesis of purines, thymidylate, methionine, and other important biomolecules. Also exhibits THF-independent aldolase activity toward beta-hydroxyamino acids, producing glycine and aldehydes, via a retro-aldol mechanism. The protein is Serine hydroxymethyltransferase of Wolbachia pipientis subsp. Culex pipiens (strain wPip).